Reading from the N-terminus, the 438-residue chain is Glutaryl-CoA dehydrogenase, mitochondrial (438 aa).

Residues 1-44 (MALRGVSVQLLSRVPGLRVFRTWVSSAAQTEKVGRTQSQLAKSS) constitute a mitochondrion transit peptide. Residues 138–139 (RS) and S186 each bind substrate. Residues 177 to 186 (FGLTEPNSGS), S186, and 212 to 214 (WIT) contribute to the FAD site. An N6-acetyllysine modification is found at K240. Position 287–294 (287–294 (FGCLNNGR)) interacts with substrate. Residues R319, Q330, and 387–391 (DMLGG) contribute to the FAD site. The active-site Proton acceptor is E414. Residue G415 participates in substrate binding. Residues T416, 416–418 (THD), and F434 contribute to the FAD site.

The protein belongs to the acyl-CoA dehydrogenase family. As to quaternary structure, homotetramer. FAD is required as a cofactor.

The protein resides in the mitochondrion matrix. It catalyses the reaction glutaryl-CoA + oxidized [electron-transfer flavoprotein] + 2 H(+) = (2E)-butenoyl-CoA + reduced [electron-transfer flavoprotein] + CO2. Its pathway is amino-acid metabolism; lysine degradation. The protein operates within amino-acid metabolism; tryptophan metabolism. Catalyzes the oxidative decarboxylation of glutaryl-CoA to crotonyl-CoA and CO(2) in the degradative pathway of L-lysine, L-hydroxylysine, and L-tryptophan metabolism. It uses electron transfer flavoprotein as its electron acceptor. The chain is Glutaryl-CoA dehydrogenase, mitochondrial (GCDH) from Macaca fascicularis (Crab-eating macaque).